The primary structure comprises 571 residues: Proline--tRNA ligase (571 aa).

It belongs to the class-II aminoacyl-tRNA synthetase family. ProS type 1 subfamily. In terms of assembly, homodimer.

It is found in the cytoplasm. It catalyses the reaction tRNA(Pro) + L-proline + ATP = L-prolyl-tRNA(Pro) + AMP + diphosphate. Functionally, catalyzes the attachment of proline to tRNA(Pro) in a two-step reaction: proline is first activated by ATP to form Pro-AMP and then transferred to the acceptor end of tRNA(Pro). As ProRS can inadvertently accommodate and process non-cognate amino acids such as alanine and cysteine, to avoid such errors it has two additional distinct editing activities against alanine. One activity is designated as 'pretransfer' editing and involves the tRNA(Pro)-independent hydrolysis of activated Ala-AMP. The other activity is designated 'posttransfer' editing and involves deacylation of mischarged Ala-tRNA(Pro). The misacylated Cys-tRNA(Pro) is not edited by ProRS. This is Proline--tRNA ligase from Histophilus somni (strain 129Pt) (Haemophilus somnus).